A 303-amino-acid chain; its full sequence is Putative S-adenosyl-L-methionine-dependent methyltransferase MAV_4435 (303 aa).

S-adenosyl-L-methionine is bound by residues Asp-129 and 158–159; that span reads DL.

This sequence belongs to the UPF0677 family.

Its function is as follows. Exhibits S-adenosyl-L-methionine-dependent methyltransferase activity. This Mycobacterium avium (strain 104) protein is Putative S-adenosyl-L-methionine-dependent methyltransferase MAV_4435.